The primary structure comprises 352 residues: NADP-dependent isopropanol dehydrogenase (352 aa).

Zn(2+)-binding residues include cysteine 37, histidine 59, and aspartate 150. Residues 175–178 (IGPV), 198–200 (GSR), tyrosine 218, 265–267 (VNY), and lysine 340 each bind NADP(+).

It belongs to the zinc-containing alcohol dehydrogenase family. In terms of assembly, homotetramer. It depends on Zn(2+) as a cofactor.

The catalysed reaction is propan-2-ol + NADP(+) = acetone + NADPH + H(+). Alcohol dehydrogenase with a preference for medium chain secondary alcohols, such as 2-butanol and isopropanol. Has very low activity with primary alcohols, such as ethanol. Under physiological conditions, the enzyme reduces aldehydes and 2-ketones to produce secondary alcohols. Is also active with acetaldehyde and propionaldehyde. In Thermoanaerobacter brockii (Thermoanaerobium brockii), this protein is NADP-dependent isopropanol dehydrogenase (adh).